The primary structure comprises 434 residues: Progestin and adipoQ receptor-like protein 1 (434 aa).

Residues 1-201 lie on the Cytoplasmic side of the membrane; it reads MNPDEVNRAL…KSIWSLHTET (201 aa). 2 disordered regions span residues 74-103 and 118-137; these read LPQQ…MPKH and EINL…ELEV. Residues 202–222 traverse the membrane as a helical segment; the sequence is GNIWTHLIGCVAFFFLACWFL. The Extracellular segment spans residues 223-234; it reads TRPDNHIQFQEK. A helical transmembrane segment spans residues 235–255; the sequence is VVFSFFFAGAVLCLGLSFAFH. The Cytoplasmic segment spans residues 256–273; that stretch reads TLSCHSVNVVKIFCKLDY. Residues 274–294 form a helical membrane-spanning segment; the sequence is MGISLLIIGSFIPWIYYGFYC. Topologically, residues 295 to 299 are extracellular; it reads RREPK. A helical membrane pass occupies residues 300–320; it reads ITYIAMVSVLGIGAIVVSLWD. Residues 321-331 are Cytoplasmic-facing; it reads KFSESRFRPIR. A helical membrane pass occupies residues 332–352; sequence AAVFVGMGCSGVIPTIHYIIT. Topologically, residues 353–362 are extracellular; it reads DGVHSLFADN. A helical membrane pass occupies residues 363 to 383; it reads SFHWLLLMAFLYLLGAGLYAT. Over 384-403 the chain is Cytoplasmic; sequence RTPERFFPGKCDIWFQSHQL. A helical transmembrane segment spans residues 404-424; sequence FHTCVVIAAFVHYYGISEMAF. The Extracellular segment spans residues 425-434; it reads ARLNEQCPVR.

Belongs to the ADIPOR family.

Its subcellular location is the membrane. Probable receptor, which may be involved in metabolic pathways that regulate lipid metabolism such as fatty acid oxidation. In Caenorhabditis elegans, this protein is Progestin and adipoQ receptor-like protein 1 (paqr-1).